We begin with the raw amino-acid sequence, 532 residues long: MCNSKPSSASSSLLSCKDKTHISKLETCDTDNPHYSEFRDTDSLDLKRWPSFLEGLEEVKAIGKISGPTAMTGLLMYSRAMISMLFLGYLGELELAGGSLSIGFANITGYSVISGLSMGMEPICGQAYGAKQMKLLGLTLQRTVLLLLSCSVPISFSWLNMRRILLWCGQDEEISSVAQQFLLFAIPDLFLLSLLHPLRIYLRTQNITLPVTYSTAVSVLLHVPLNYLLVVKLEMGVAGVAIAMVLTNLNLVVLLSSFVYFTSVHSDTWVPITIDSLKGWSALLSLAIPTCVSVCLEWWWYEFMIILCGLLANPRATVASMGILIQTTALVYVFPSSLSLGVSTRISNELGAKRPAKARVSMIISLFCAIALGLMAMVFAVLVRHHWGRLFTTDAEILQLTSIALPIVGLCELGNCPQTTGCGVLRGCARPTLGANINLGSFYFVGMPVAILFGFVFKQGFPGLWFGLLAAQATCASLMLCALLRTDWKVQAERAEELTSQTPGKSPPLLPIASSKSRSTSGTEDMMRTMLV.

The next 12 membrane-spanning stretches (helical) occupy residues 65 to 85 (ISGPTAMTGLLMYSRAMISML), 95 to 115 (LAGGSLSIGFANITGYSVISG), 136 to 156 (LGLTLQRTVLLLLSCSVPISF), 174 to 194 (ISSVAQQFLLFAIPDLFLLSL), 211 to 231 (VTYSTAVSVLLHVPLNYLLVV), 235 to 255 (MGVAGVAIAMVLTNLNLVVLL), 279 to 301 (GWSALLSLAIPTCVSVCLEWWWY), 322 to 342 (GILIQTTALVYVFPSSLSLGV), 363 to 383 (IISLFCAIALGLMAMVFAVLV), 397 to 417 (ILQLTSIALPIVGLCELGNCP), 437 to 457 (INLGSFYFVGMPVAILFGFVF), and 464 to 484 (LWFGLLAAQATCASLMLCALL). The segment at 496–532 (EELTSQTPGKSPPLLPIASSKSRSTSGTEDMMRTMLV) is disordered. A compositionally biased stretch (polar residues) spans 514 to 523 (SSKSRSTSGT).

Belongs to the multi antimicrobial extrusion (MATE) (TC 2.A.66.1) family. In terms of tissue distribution, highly expressed in shoot apices relative to leaves. At vegetative stages, highly expressed at the stipules. At reproductive stages, most highly expressed in the mature pollen. Also expressed in the tips of sepals.

The protein localises to the golgi apparatus membrane. It localises to the late endosome membrane. In terms of biological role, functions as a multidrug and toxin extrusion transporter. Contributes to iron homeostasis during stress responses and senescence. Could be involved in specifying the lateral organ initiation rate. May act as a negative regulator of hypocotyl cell elongation in the light. This Arabidopsis thaliana (Mouse-ear cress) protein is Protein DETOXIFICATION 48.